Here is a 337-residue protein sequence, read N- to C-terminus: Phenylalanine--tRNA ligase alpha subunit (337 aa).

Glu252 is a binding site for Mg(2+).

This sequence belongs to the class-II aminoacyl-tRNA synthetase family. Phe-tRNA synthetase alpha subunit type 1 subfamily. In terms of assembly, tetramer of two alpha and two beta subunits. Mg(2+) serves as cofactor.

It localises to the cytoplasm. The catalysed reaction is tRNA(Phe) + L-phenylalanine + ATP = L-phenylalanyl-tRNA(Phe) + AMP + diphosphate + H(+). This chain is Phenylalanine--tRNA ligase alpha subunit, found in Francisella tularensis subsp. tularensis (strain SCHU S4 / Schu 4).